Reading from the N-terminus, the 133-residue chain is Endoribonuclease YbeY (133 aa).

Zn(2+)-binding residues include His105, His109, and His115.

The protein belongs to the endoribonuclease YbeY family. Requires Zn(2+) as cofactor.

It localises to the cytoplasm. Its function is as follows. Single strand-specific metallo-endoribonuclease involved in late-stage 70S ribosome quality control and in maturation of the 3' terminus of the 16S rRNA. This chain is Endoribonuclease YbeY, found in Lawsonia intracellularis (strain PHE/MN1-00).